The following is a 155-amino-acid chain: Large ribosomal subunit protein uL30 (155 aa).

Belongs to the universal ribosomal protein uL30 family. As to quaternary structure, part of the 50S ribosomal subunit.

In Nitrosopumilus maritimus (strain SCM1), this protein is Large ribosomal subunit protein uL30.